We begin with the raw amino-acid sequence, 312 residues long: Telomere-binding protein OPG077 (312 aa).

The protein belongs to the orthopoxvirus OPG077 family.

The protein localises to the virion. Functionally, DNA-binding protein which binds to the hairpin form of the viral telomeric sequence. Required for the production of mature virions (MV). The polypeptide is Telomere-binding protein OPG077 (OPG077) (Monkeypox virus).